Consider the following 940-residue polypeptide: Isoleucine--tRNA ligase (940 aa).

The short motif at 58 to 68 is the 'HIGH' region element; it reads PYANGSIHIGH. E564 provides a ligand contact to L-isoleucyl-5'-AMP. Residues 605–609 carry the 'KMSKS' region motif; it reads KMSKS. An ATP-binding site is contributed by K608. Residues C903, C906, C923, and C926 each coordinate Zn(2+).

Belongs to the class-I aminoacyl-tRNA synthetase family. IleS type 1 subfamily. As to quaternary structure, monomer. Zn(2+) serves as cofactor.

The protein resides in the cytoplasm. It catalyses the reaction tRNA(Ile) + L-isoleucine + ATP = L-isoleucyl-tRNA(Ile) + AMP + diphosphate. In terms of biological role, catalyzes the attachment of isoleucine to tRNA(Ile). As IleRS can inadvertently accommodate and process structurally similar amino acids such as valine, to avoid such errors it has two additional distinct tRNA(Ile)-dependent editing activities. One activity is designated as 'pretransfer' editing and involves the hydrolysis of activated Val-AMP. The other activity is designated 'posttransfer' editing and involves deacylation of mischarged Val-tRNA(Ile). This Shewanella sediminis (strain HAW-EB3) protein is Isoleucine--tRNA ligase.